Consider the following 461-residue polypeptide: Bifunctional protein GlmU (461 aa).

Residues 1–232 (MNLQIIILAA…SFEVQGINNR (232 aa)) form a pyrophosphorylase region. Residues 8 to 11 (LAAG), K22, Q73, and 78 to 79 (GT) contribute to the UDP-N-acetyl-alpha-D-glucosamine site. D102 provides a ligand contact to Mg(2+). The UDP-N-acetyl-alpha-D-glucosamine site is built by G142, E157, and N230. Mg(2+) is bound at residue N230. The segment at 233-253 (QQLQQLERTWQQRAANQLMEK) is linker. The segment at 254-461 (GATLADANRF…WKRPVKRERD (208 aa)) is N-acetyltransferase. Positions 336 and 354 each coordinate UDP-N-acetyl-alpha-D-glucosamine. Residue H366 is the Proton acceptor of the active site. Y369 and N380 together coordinate UDP-N-acetyl-alpha-D-glucosamine. Residues A383, 389–390 (NY), S408, and A426 each bind acetyl-CoA.

It in the N-terminal section; belongs to the N-acetylglucosamine-1-phosphate uridyltransferase family. This sequence in the C-terminal section; belongs to the transferase hexapeptide repeat family. In terms of assembly, homotrimer. Mg(2+) serves as cofactor.

The protein localises to the cytoplasm. It catalyses the reaction alpha-D-glucosamine 1-phosphate + acetyl-CoA = N-acetyl-alpha-D-glucosamine 1-phosphate + CoA + H(+). The catalysed reaction is N-acetyl-alpha-D-glucosamine 1-phosphate + UTP + H(+) = UDP-N-acetyl-alpha-D-glucosamine + diphosphate. It participates in nucleotide-sugar biosynthesis; UDP-N-acetyl-alpha-D-glucosamine biosynthesis; N-acetyl-alpha-D-glucosamine 1-phosphate from alpha-D-glucosamine 6-phosphate (route II): step 2/2. Its pathway is nucleotide-sugar biosynthesis; UDP-N-acetyl-alpha-D-glucosamine biosynthesis; UDP-N-acetyl-alpha-D-glucosamine from N-acetyl-alpha-D-glucosamine 1-phosphate: step 1/1. It functions in the pathway bacterial outer membrane biogenesis; LPS lipid A biosynthesis. In terms of biological role, catalyzes the last two sequential reactions in the de novo biosynthetic pathway for UDP-N-acetylglucosamine (UDP-GlcNAc). The C-terminal domain catalyzes the transfer of acetyl group from acetyl coenzyme A to glucosamine-1-phosphate (GlcN-1-P) to produce N-acetylglucosamine-1-phosphate (GlcNAc-1-P), which is converted into UDP-GlcNAc by the transfer of uridine 5-monophosphate (from uridine 5-triphosphate), a reaction catalyzed by the N-terminal domain. This is Bifunctional protein GlmU from Legionella pneumophila (strain Paris).